A 218-amino-acid chain; its full sequence is MQAIRLGLHTAAAVVTLSISAVSCGTKTPDYQLILSKSSTTTTTTPDKPIPLPQYLESIGVTGQQVAPSSLPGLTVSIPTPPGWSPYSNPNITPETLIIAKSGKYPTARLVAFKLRGDFDPTQVIKHGNDDAQLFENFRQLDVSTANYNGFPSAMIQGSYDLEGRRLHAWNRIVIPTGPPPSKQQYLVQLTITSLANEAVAQSNDIEAIIRGFVVAPK.

The N-terminal stretch at 1–23 is a signal peptide; sequence MQAIRLGLHTAAAVVTLSISAVS. A lipid anchor (N-palmitoyl cysteine) is attached at Cys-24. Cys-24 carries S-diacylglycerol cysteine lipidation.

The protein resides in the cell membrane. This Mycobacterium leprae (strain TN) protein is Putative lipoprotein LpqT (lpqT).